The chain runs to 116 residues: Ribonuclease P protein component (116 aa).

It belongs to the RnpA family. As to quaternary structure, consists of a catalytic RNA component (M1 or rnpB) and a protein subunit.

The catalysed reaction is Endonucleolytic cleavage of RNA, removing 5'-extranucleotides from tRNA precursor.. In terms of biological role, RNaseP catalyzes the removal of the 5'-leader sequence from pre-tRNA to produce the mature 5'-terminus. It can also cleave other RNA substrates such as 4.5S RNA. The protein component plays an auxiliary but essential role in vivo by binding to the 5'-leader sequence and broadening the substrate specificity of the ribozyme. This chain is Ribonuclease P protein component, found in Geobacter sp. (strain M21).